The sequence spans 430 residues: UDP-N-acetylglucosamine 1-carboxyvinyltransferase (430 aa).

22 to 23 (KN) provides a ligand contact to phosphoenolpyruvate. Position 102 (Arg102) interacts with UDP-N-acetyl-alpha-D-glucosamine. Cys126 functions as the Proton donor in the catalytic mechanism. Residue Cys126 is modified to 2-(S-cysteinyl)pyruvic acid O-phosphothioketal. Residues 131 to 135 (RPVDL), 172 to 175 (KVSV), Asp317, and Ile339 each bind UDP-N-acetyl-alpha-D-glucosamine.

The protein belongs to the EPSP synthase family. MurA subfamily.

The protein localises to the cytoplasm. It catalyses the reaction phosphoenolpyruvate + UDP-N-acetyl-alpha-D-glucosamine = UDP-N-acetyl-3-O-(1-carboxyvinyl)-alpha-D-glucosamine + phosphate. It participates in cell wall biogenesis; peptidoglycan biosynthesis. Its function is as follows. Cell wall formation. Adds enolpyruvyl to UDP-N-acetylglucosamine. The sequence is that of UDP-N-acetylglucosamine 1-carboxyvinyltransferase from Rhizobium leguminosarum bv. trifolii (strain WSM2304).